Reading from the N-terminus, the 226-residue chain is Endonuclease NucS (226 aa).

It belongs to the NucS endonuclease family.

The protein localises to the cytoplasm. Cleaves both 3' and 5' ssDNA extremities of branched DNA structures. This is Endonuclease NucS from Mycobacterium tuberculosis (strain ATCC 25618 / H37Rv).